The following is a 227-amino-acid chain: Cytochrome c oxidase subunit 2 (227 aa).

Topologically, residues 1–14 are mitochondrial intermembrane; that stretch reads MAYPFQLGLQDATS. The chain crosses the membrane as a helical span at residues 15-45; that stretch reads PIMEELLHFHDHTLMIVFLISSLVLYIISLM. Over 46-59 the chain is Mitochondrial matrix; the sequence is LTTKLTHTSTMDAQ. The chain crosses the membrane as a helical span at residues 60 to 87; sequence EVETVWTILPAIILISIALPSLRILYMM. The Mitochondrial intermembrane segment spans residues 88 to 227; it reads DEINNPSLTV…YFEAWSTLMM (140 aa). Residues histidine 161, cysteine 196, glutamate 198, cysteine 200, histidine 204, and methionine 207 each coordinate Cu cation. Glutamate 198 is a Mg(2+) binding site. Tyrosine 218 carries the phosphotyrosine modification.

This sequence belongs to the cytochrome c oxidase subunit 2 family. As to quaternary structure, component of the cytochrome c oxidase (complex IV, CIV), a multisubunit enzyme composed of 14 subunits. The complex is composed of a catalytic core of 3 subunits MT-CO1, MT-CO2 and MT-CO3, encoded in the mitochondrial DNA, and 11 supernumerary subunits COX4I, COX5A, COX5B, COX6A, COX6B, COX6C, COX7A, COX7B, COX7C, COX8 and NDUFA4, which are encoded in the nuclear genome. The complex exists as a monomer or a dimer and forms supercomplexes (SCs) in the inner mitochondrial membrane with NADH-ubiquinone oxidoreductase (complex I, CI) and ubiquinol-cytochrome c oxidoreductase (cytochrome b-c1 complex, complex III, CIII), resulting in different assemblies (supercomplex SCI(1)III(2)IV(1) and megacomplex MCI(2)III(2)IV(2)). Found in a complex with TMEM177, COA6, COX18, COX20, SCO1 and SCO2. Interacts with TMEM177 in a COX20-dependent manner. Interacts with COX20. Interacts with COX16. It depends on Cu cation as a cofactor.

It is found in the mitochondrion inner membrane. The catalysed reaction is 4 Fe(II)-[cytochrome c] + O2 + 8 H(+)(in) = 4 Fe(III)-[cytochrome c] + 2 H2O + 4 H(+)(out). Component of the cytochrome c oxidase, the last enzyme in the mitochondrial electron transport chain which drives oxidative phosphorylation. The respiratory chain contains 3 multisubunit complexes succinate dehydrogenase (complex II, CII), ubiquinol-cytochrome c oxidoreductase (cytochrome b-c1 complex, complex III, CIII) and cytochrome c oxidase (complex IV, CIV), that cooperate to transfer electrons derived from NADH and succinate to molecular oxygen, creating an electrochemical gradient over the inner membrane that drives transmembrane transport and the ATP synthase. Cytochrome c oxidase is the component of the respiratory chain that catalyzes the reduction of oxygen to water. Electrons originating from reduced cytochrome c in the intermembrane space (IMS) are transferred via the dinuclear copper A center (CU(A)) of subunit 2 and heme A of subunit 1 to the active site in subunit 1, a binuclear center (BNC) formed by heme A3 and copper B (CU(B)). The BNC reduces molecular oxygen to 2 water molecules using 4 electrons from cytochrome c in the IMS and 4 protons from the mitochondrial matrix. The chain is Cytochrome c oxidase subunit 2 (MT-CO2) from Lycaon pictus (African wild dog).